A 244-amino-acid polypeptide reads, in one-letter code: uncharacterized protein (244 aa).

A signal peptide spans 1-17; sequence MVLHVITALLSIGLCYG.

As to expression, component of the acid-soluble and acid-insoluble organic matrix of prismatic shell layers (at protein level).

It localises to the secreted. This is an uncharacterized protein from Haliotis asinina (Donkey's ear abalone).